A 513-amino-acid chain; its full sequence is Ferulic acid decarboxylase 1 (513 aa).

Mn(2+)-binding residues include Asn-174, His-197, and Glu-240. Prenylated FMN-binding positions include 174-179 (NWSIAR), 196-197 (QH), and Glu-240. The active-site Proton donor is Glu-289. Residue Lys-405 coordinates prenylated FMN.

Belongs to the UbiD family. UbiD-like/FDC subfamily. In terms of assembly, homodimer. May form higher order oligomers. Mn(2+) serves as cofactor. It depends on prenylated FMN as a cofactor.

Its subcellular location is the cytoplasm. The enzyme catalyses (E)-4-coumarate + H(+) = 4-vinylphenol + CO2. It carries out the reaction (E)-cinnamate + H(+) = styrene + CO2. It catalyses the reaction (E)-ferulate + H(+) = 2-methoxy-4-vinylphenol + CO2. In terms of biological role, catalyzes the reversible decarboxylation of aromatic carboxylic acids like ferulic acid, p-coumaric acid or cinnamic acid, producing the corresponding vinyl derivatives 4-vinylphenol, 4-vinylguaiacol, and styrene, respectively, which play the role of aroma metabolites. The protein is Ferulic acid decarboxylase 1 of Candida dubliniensis (strain CD36 / ATCC MYA-646 / CBS 7987 / NCPF 3949 / NRRL Y-17841) (Yeast).